Here is a 213-residue protein sequence, read N- to C-terminus: Na(+)-translocating NADH-quinone reductase subunit D (213 aa).

6 consecutive transmembrane segments (helical) span residues 21–41 (PLIA…VNTA), 42–62 (ITMG…VSLL), 69–86 (SVRM…VIVI), 101–121 (LSVF…AESL), 131–151 (FLDG…VSIV), and 183–203 (FGLM…IWGV).

It belongs to the NqrDE/RnfAE family. Composed of six subunits; NqrA, NqrB, NqrC, NqrD, NqrE and NqrF.

It localises to the cell inner membrane. The enzyme catalyses a ubiquinone + n Na(+)(in) + NADH + H(+) = a ubiquinol + n Na(+)(out) + NAD(+). Its function is as follows. NQR complex catalyzes the reduction of ubiquinone-1 to ubiquinol by two successive reactions, coupled with the transport of Na(+) ions from the cytoplasm to the periplasm. NqrA to NqrE are probably involved in the second step, the conversion of ubisemiquinone to ubiquinol. In Chlamydia caviae (strain ATCC VR-813 / DSM 19441 / 03DC25 / GPIC) (Chlamydophila caviae), this protein is Na(+)-translocating NADH-quinone reductase subunit D.